A 67-amino-acid polypeptide reads, in one-letter code: Small ribosomal subunit protein eS17 (67 aa).

The protein belongs to the eukaryotic ribosomal protein eS17 family.

The chain is Small ribosomal subunit protein eS17 from Thermococcus sibiricus (strain DSM 12597 / MM 739).